A 397-amino-acid polypeptide reads, in one-letter code: MTPAIYLVKGRDKSLRRKHPWVFSRGISKVEGTPKLGETVDVYSFEGKWLAKAAYSPHSQITARVWSFEQEPIDRDFFIKRIEQAQLLRNDIIERDGLTGYRLIAAESDGLPGITIDKYQDYLVCQLLSAGAEYQKQTLVEALLHCFPECHIYERSDVAVRKKEGLDERVGVLHGELPPKSVVIEENGVKISVDIVGGHKTGFYLDQRDSRFQSMKYVKEKEVLNCFSYTGGFGLYALKGGAKRVINADVSQPALDTAKFNAELNGFDISKKRAVFLNADVFKLLREYRDQGTRFDVVVMDPPKFAESKAQLDGACRGYKDINMLAMQILNPGGTLLTYSCSGLMDQVLFQKIIADAALDAGRDVKFVERFEQAADHPTDTAYPEGFYLKGFACKVL.

Residues 2–78 (TPAIYLVKGR…EQEPIDRDFF (77 aa)) enclose the PUA domain.

Belongs to the methyltransferase superfamily. RlmI family.

The protein localises to the cytoplasm. It carries out the reaction cytidine(1962) in 23S rRNA + S-adenosyl-L-methionine = 5-methylcytidine(1962) in 23S rRNA + S-adenosyl-L-homocysteine + H(+). Its function is as follows. Specifically methylates the cytosine at position 1962 (m5C1962) of 23S rRNA. The protein is Ribosomal RNA large subunit methyltransferase I of Vibrio cholerae serotype O1 (strain ATCC 39541 / Classical Ogawa 395 / O395).